A 469-amino-acid polypeptide reads, in one-letter code: MNPNQKIITIGSVSLTIATVCFLMQIAILVTTVTLHFKQYECDSPASNQVMPCEPIIIERNITEIVYLNNTTIEKEICPKVVEYRNWSKPQCQITGFAPFSKDNSIRLSAGGDIWVTREPYVSCDHGKCYQFALGQGTTLDNKHSNDTIHDRIPHRTLLMNELGVPFHLGTRQVCIAWSSSSCHDGKAWLHVCITGDDKNATASFIYDGRLVDSIGSWSQNILRTQESECVCINGTCTVVMTDGSASGRADTRILFIEEGKIVHISPLSGSAQHVEECSCYPRYPGVRCICRDNWKGSNRPVVDINMEDYSIDSSYVCSGLVGDTPRNDDRSSNSNCRNPNNERGNQGVKGWAFDNGDDVWMGRTISKDLRSGYETFKVIGGWSTPNSKSQINRQVIVDSDNRSGYSGIFSVEGKSCINRCFYVELIRGRKQETRVWWTSNSIVVFCGTSGTYGTGSWPDGANINFMPI.

Residues 1–9 (MNPNQKIIT) lie on the Intravirion side of the membrane. Residues 10-30 (IGSVSLTIATVCFLMQIAILV) traverse the membrane as a helical segment. An involved in apical transport and lipid raft association region spans residues 11–33 (GSVSLTIATVCFLMQIAILVTTV). At 31–469 (TTVTLHFKQY…DGANINFMPI (439 aa)) the chain is on the virion surface side. Residues 36-88 (HFKQYECDSPASNQVMPCEPIIIERNITEIVYLNNTTIEKEICPKVVEYRNWS) form a hypervariable stalk region region. N-linked (GlcNAc...) asparagine; by host glycans are attached at residues asparagine 61, asparagine 69, asparagine 70, and asparagine 86. Residues 91–469 (QCQITGFAPF…DGANINFMPI (379 aa)) form a head of neuraminidase region. Disulfide bonds link cysteine 92-cysteine 417, cysteine 124-cysteine 129, cysteine 183-cysteine 230, cysteine 232-cysteine 237, cysteine 278-cysteine 291, cysteine 280-cysteine 289, cysteine 318-cysteine 337, and cysteine 421-cysteine 447. Arginine 118 contributes to the substrate binding site. N-linked (GlcNAc...) asparagine; by host glycosylation occurs at asparagine 146. Aspartate 151 serves as the catalytic Proton donor/acceptor. A substrate-binding site is contributed by arginine 152. N-linked (GlcNAc...) asparagine; by host glycans are attached at residues asparagine 200 and asparagine 234. Position 276-277 (276-277 (EE)) interacts with substrate. A substrate-binding site is contributed by arginine 292. Ca(2+)-binding residues include aspartate 293, glycine 297, and aspartate 324. The disordered stretch occupies residues 324–350 (DTPRNDDRSSNSNCRNPNNERGNQGVK). Residues 333–342 (SNSNCRNPNN) are compositionally biased toward low complexity. Arginine 371 is a binding site for substrate. The N-linked (GlcNAc...) asparagine; by host glycan is linked to asparagine 402. Tyrosine 406 functions as the Nucleophile in the catalytic mechanism.

This sequence belongs to the glycosyl hydrolase 34 family. Homotetramer. It depends on Ca(2+) as a cofactor. N-glycosylated.

The protein resides in the virion membrane. The protein localises to the host apical cell membrane. The catalysed reaction is Hydrolysis of alpha-(2-&gt;3)-, alpha-(2-&gt;6)-, alpha-(2-&gt;8)- glycosidic linkages of terminal sialic acid residues in oligosaccharides, glycoproteins, glycolipids, colominic acid and synthetic substrates.. With respect to regulation, inhibited by the neuraminidase inhibitors zanamivir (Relenza) and oseltamivir (Tamiflu). These drugs interfere with the release of progeny virus from infected cells and are effective against all influenza strains. Resistance to neuraminidase inhibitors is quite rare. In terms of biological role, catalyzes the removal of terminal sialic acid residues from viral and cellular glycoconjugates. Cleaves off the terminal sialic acids on the glycosylated HA during virus budding to facilitate virus release. Additionally helps virus spread through the circulation by further removing sialic acids from the cell surface. These cleavages prevent self-aggregation and ensure the efficient spread of the progeny virus from cell to cell. Otherwise, infection would be limited to one round of replication. Described as a receptor-destroying enzyme because it cleaves a terminal sialic acid from the cellular receptors. May facilitate viral invasion of the upper airways by cleaving the sialic acid moieties on the mucin of the airway epithelial cells. Likely to plays a role in the budding process through its association with lipid rafts during intracellular transport. May additionally display a raft-association independent effect on budding. Plays a role in the determination of host range restriction on replication and virulence. Sialidase activity in late endosome/lysosome traffic seems to enhance virus replication. The sequence is that of Neuraminidase from Aves (whales).